Reading from the N-terminus, the 361-residue chain is 3-dehydroquinate synthase (361 aa).

It belongs to the archaeal-type DHQ synthase family.

It carries out the reaction 2-amino-2,3,7-trideoxy-D-lyxo-hept-6-ulosonate + NAD(+) + H2O = 3-dehydroquinate + NH4(+) + NADH + H(+). Catalyzes the oxidative deamination and cyclization of 2-amino-3,7-dideoxy-D-threo-hept-6-ulosonic acid (ADH) to yield 3-dehydroquinate (DHQ), which is fed into the canonical shikimic pathway of aromatic amino acid biosynthesis. The polypeptide is 3-dehydroquinate synthase (Methanococcus vannielii (strain ATCC 35089 / DSM 1224 / JCM 13029 / OCM 148 / SB)).